Consider the following 258-residue polypeptide: Venom plasminogen activator TSV-PA (258 aa).

The N-terminal stretch at 1-18 is a signal peptide; the sequence is MELIRVLANLLILQLSYA. The propeptide occupies 19-24; sequence QKSSEL. In terms of domain architecture, Peptidase S1 spans 25 to 249; the sequence is VFGGDECNIN…YLDWIKSIIA (225 aa). Intrachain disulfides connect C31–C163, C50–C66, C98–C256, C142–C210, C174–C189, and C200–C225. Catalysis depends on charge relay system residues H65 and D110. An N-linked (GlcNAc...) asparagine glycan is attached at N185. S204 functions as the Charge relay system in the catalytic mechanism.

This sequence belongs to the peptidase S1 family. Snake venom subfamily. In terms of assembly, monomer. Expressed by the venom gland.

Its subcellular location is the secreted. Snake venom serine protease that activates plasminogen. The chain is Venom plasminogen activator TSV-PA from Trimeresurus stejnegeri (Chinese green tree viper).